The following is a 923-amino-acid chain: Neuropilin-1a (923 aa).

The N-terminal stretch at 1–19 (MHCGLVLILFTGIFLIVSA) is a signal peptide. Residues 20-856 (LKNDKCGDNI…AGNMLKTLDP (837 aa)) are Extracellular-facing. Intrachain disulfides connect C25–C52, C80–C102, and C145–C171. CUB domains are found at residues 25-139 (CGDN…YEIF) and 145-263 (CSRN…FTVL). The N-linked (GlcNAc...) asparagine glycan is linked to N148. Ca(2+)-binding residues include E193, D207, and D248. C204 and C226 are oxidised to a cystine. N-linked (GlcNAc...) asparagine glycosylation is present at N259. 2 cysteine pairs are disulfide-bonded: C273–C422 and C429–C581. 2 consecutive F5/8 type C domains span residues 273–422 (CTEP…VYGC) and 429–581 (CSGM…LLGC). N520 is a glycosylation site (N-linked (GlcNAc...) asparagine). A disordered region spans residues 587–624 (TVPPTTPAASTTPSDECDDDQANCHSGTGDGYDQTGGT). S612 carries an O-linked (Xyl...) (chondroitin sulfate) serine; alternate glycan. An O-linked (Xyl...) (heparan sulfate) serine; alternate glycan is attached at S612. The 170-residue stretch at 642–811 (FACDFGWAND…DNVNMADCKD (170 aa)) folds into the MAM domain. The helical transmembrane segment at 857-877 (ILITIIAMSALGVFLGAICGV) threads the bilayer. Over 878-923 (VLYCACSHSGMSDRNLSALENYNFELVDGVKLKKDKLNSQNSYSEA) the chain is Cytoplasmic.

It belongs to the neuropilin family.

It localises to the membrane. Receptor involved in the development of the cardiovascular system, in angiogenesis, in the formation of certain neuronal circuits and in organogenesis outside the nervous system. It mediates the chemorepulsant activity of semaphorins. Regulates angiogenesis through a VEGF-dependent pathway. This is Neuropilin-1a (nrp1a) from Danio rerio (Zebrafish).